A 348-amino-acid chain; its full sequence is Thioesterase-like protein TwmA (348 aa).

Its pathway is secondary metabolite biosynthesis. In terms of biological role, thioesterase-like protein; part of the gene cluster that mediates the biosynthesis of wortmanamides A and B, reduced long-chain polyketides amidated with a specific omega-amino acid, 5-aminopentanoic acid (5PA). The PKS modules of TwmB are involved in the synthesis of the polyketide backbone, whereas the non-canonical C domain of TwmB is a bonafide condensation domain that specifically selects 5PA and catalyzes amidation to release polyketide chain. The C domain clearly prefers C16 and C18 fatty acyl substrates, which is consistent with simultaneous formation of both octaketide and nonaketide acyl amides wortmanamides A and B. Because TwmB lacks a designated enoylreductase (ER) domain, the required activity is provided the enoyl reductase TwmE. The roles of the remaining enzymes have still to be clarified. The chain is Thioesterase-like protein TwmA from Talaromyces wortmannii (Penicillium wortmannii).